Reading from the N-terminus, the 346-residue chain is Farnesyl diphosphate synthase 1 (346 aa).

Residues Lys-52, Arg-55, and Gln-90 each contribute to the isopentenyl diphosphate site. Mg(2+) is bound by residues Asp-97 and Asp-101. The short motif at 97–101 (DDIMD) is the DDXXD motif element. Arg-106 contacts dimethylallyl diphosphate. An isopentenyl diphosphate-binding site is contributed by Arg-107. Residues Lys-194, Thr-195, and Gln-233 each coordinate dimethylallyl diphosphate. The DDXXD motif motif lies at 236 to 240 (DDYLD). Residues Lys-250 and Lys-259 each coordinate dimethylallyl diphosphate.

Belongs to the FPP/GGPP synthase family. Requires Mg(2+) as cofactor. The cofactor is Mn(2+). Highly expressed in shoots.

The catalysed reaction is isopentenyl diphosphate + (2E)-geranyl diphosphate = (2E,6E)-farnesyl diphosphate + diphosphate. It carries out the reaction isopentenyl diphosphate + dimethylallyl diphosphate = (2E)-geranyl diphosphate + diphosphate. It functions in the pathway isoprenoid biosynthesis; farnesyl diphosphate biosynthesis; farnesyl diphosphate from geranyl diphosphate and isopentenyl diphosphate: step 1/1. The protein operates within isoprenoid biosynthesis; geranyl diphosphate biosynthesis; geranyl diphosphate from dimethylallyl diphosphate and isopentenyl diphosphate: step 1/1. In terms of biological role, catalyzes the sequential condensation of isopentenyl pyrophosphate (IPP) with the allylic pyrophosphates, dimethylallyl pyrophosphate (DMAPP), and then with the resultant geranylpyrophosphate (GPP) to the ultimate product farnesyl pyrophosphate (FPP). Has a 4.5 time greater affinity for GPP versus DMAPP. This chain is Farnesyl diphosphate synthase 1 (FDS-1), found in Artemisia spiciformis (Spiked big sagebrush).